Reading from the N-terminus, the 101-residue chain is Acylphosphatase (101 aa).

The 89-residue stretch at R13–Y101 folds into the Acylphosphatase-like domain. Catalysis depends on residues R28 and N46.

The protein belongs to the acylphosphatase family.

It carries out the reaction an acyl phosphate + H2O = a carboxylate + phosphate + H(+). The protein is Acylphosphatase (acyP) of Aeropyrum pernix (strain ATCC 700893 / DSM 11879 / JCM 9820 / NBRC 100138 / K1).